A 165-amino-acid polypeptide reads, in one-letter code: Protein NKG7 (165 aa).

Transmembrane regions (helical) follow at residues 9 to 29 (LFAG…DFWI), 61 to 81 (FCIL…LSCI), 92 to 112 (LVST…MAVY), and 133 to 153 (FYLG…SLGA).

This sequence belongs to the PMP-22/EMP/MP20 family. In terms of tissue distribution, predominantly expressed by leukocytes with cytotoxic activity such as CD8(+) T-cells and natural killer cells.

It is found in the cell membrane. The protein localises to the cytolytic granule membrane. In terms of biological role, regulates cytotoxic granule exocytosis in effector lymphocytes, thus acting as a critical mediator of inflammation in a broad range of infectious and non-infectious diseases. Essential for cytotoxic degranulation of natural killer (NK) cells and CD8(+) T-cells and for the activation of CD4(+) T-cells following infection. Plays a critical role in CD8(+) T-cell and NK cell-mediated cytolysis of target cells and contributes to the cytolytic activity via the perforin/granzyme pathway by enhancing exocytosis of LAMP1-carrying lytic granules. Contributes to NK cell-mediated control of cancer metastasis. The protein is Protein NKG7 (Nkg7) of Mus musculus (Mouse).